Consider the following 362-residue polypeptide: Exopolygalacturonase (362 aa).

PbH1 repeat units lie at residues 138–164, 165–186, 188–208, and 218–239; these read CKNL…HIGR, SDGV…SLGD, SKNI…SVGS, and VVGI…RIKT. An N-linked (GlcNAc...) asparagine glycan is attached at asparagine 140. Residue aspartate 179 is the Proton donor of the active site. Residues asparagine 192 and asparagine 195 are each glycosylated (N-linked (GlcNAc...) asparagine). Histidine 202 is a catalytic residue. N-linked (GlcNAc...) asparagine glycosylation occurs at asparagine 225.

It belongs to the glycosyl hydrolase 28 family. In terms of tissue distribution, pollen tubes growing through the style during pollination.

It localises to the secreted. Its subcellular location is the cell wall. The enzyme catalyses [(1-&gt;4)-alpha-D-galacturonosyl](n) + H2O = alpha-D-galacturonate + [(1-&gt;4)-alpha-D-galacturonosyl](n-1). Its function is as follows. May function in depolymerizing pectin during pollen development, germination, and tube growth. Acts as an exo-polygalacturonase. This Oenothera organensis (Evening primrose) protein is Exopolygalacturonase.